We begin with the raw amino-acid sequence, 295 residues long: Acetaldehyde dehydrogenase (295 aa).

11 to 14 (SGNI) is an NAD(+) binding site. Catalysis depends on cysteine 127, which acts as the Acyl-thioester intermediate. Residues 158-166 (SAGPGTRSN) and asparagine 269 contribute to the NAD(+) site.

The protein belongs to the acetaldehyde dehydrogenase family.

The catalysed reaction is acetaldehyde + NAD(+) + CoA = acetyl-CoA + NADH + H(+). This Brevibacillus brevis (strain 47 / JCM 6285 / NBRC 100599) protein is Acetaldehyde dehydrogenase.